The chain runs to 299 residues: MHSLATAAPVPAALAQVDREKIYQWINELSSPDTRENALLELSKKRESVPDLAPMLWHSFGTIAALLQEIVNIYPSINPPTLTAHQSNRVCNALALLQCVASHPETRSAFLAAHIPLFLYPFLHTVSKTRPFEYLRLTSLGVIGALVKTDEQEVINFLLTTEIIPLCLRIMESGSELSKTVATFILQKILLDDTGLAYICQTYERFSHVAMILGKMVLQLSKEPSARLLKHVVRCYLRLSDNPRAREALRQCLPDQLKDTTFAQVLKDDTTTKRWLAQLVKNLQEGQVTDPRGIPLPPQ.

Belongs to the CNOT9 family. As to quaternary structure, homodimer. Component of the CCR4-NOT complex.

Its subcellular location is the nucleus. It is found in the cytoplasm. The protein resides in the P-body. In terms of biological role, component of the CCR4-NOT complex which is one of the major cellular mRNA deadenylases and is linked to various cellular processes including bulk mRNA degradation, miRNA-mediated repression, translational repression during translational initiation and general transcription regulation. Additional complex functions may be a consequence of its influence on mRNA expression. Involved in down-regulation of MYB- and JUN-dependent transcription. Enhances ligand-dependent transcriptional activity of nuclear hormone receptors. May play a role in cell differentiation. The protein is CCR4-NOT transcription complex subunit 9 of Xenopus tropicalis (Western clawed frog).